A 202-amino-acid chain; its full sequence is Ras-related protein Rab-18 (202 aa).

The GTP site is built by serine 20, glycine 23, lysine 24, serine 25, serine 26, aspartate 37, proline 38, threonine 43, glycine 69, lysine 126, aspartate 128, and alanine 155. The Effector region signature appears at 40–48 (QAATIGVDF). The tract at residues 183 to 202 (RPTFRLGQPTDTSSGNLCGC) is disordered. A compositionally biased stretch (polar residues) spans 191-202 (PTDTSSGNLCGC). 2 S-geranylgeranyl cysteine lipidation sites follow: cysteine 200 and cysteine 202. Cysteine 202 bears the Cysteine methyl ester mark.

Belongs to the small GTPase superfamily. Rab family.

The catalysed reaction is GTP + H2O = GDP + phosphate + H(+). Its function is as follows. The small GTPases Rab are key regulators of intracellular membrane trafficking, from the formation of transport vesicles to their fusion with membranes. Rabs cycle between an inactive GDP-bound form and an active GTP-bound form that is able to recruit to membranes different sets of downstream effectors directly responsible for vesicle formation, movement, tethering and fusion. Plays a role in apical endocytosis/recycling. May be implicated in transport between the plasma membrane and early endosomes. The protein is Ras-related protein Rab-18 (rab-18) of Caenorhabditis briggsae.